The primary structure comprises 126 residues: Aspartate 1-decarboxylase (126 aa).

S25 acts as the Schiff-base intermediate with substrate; via pyruvic acid in catalysis. At S25 the chain carries Pyruvic acid (Ser). T57 serves as a coordination point for substrate. Y58 acts as the Proton donor in catalysis. Position 73 to 75 (73 to 75 (GGA)) interacts with substrate.

Belongs to the PanD family. Heterooctamer of four alpha and four beta subunits. Requires pyruvate as cofactor. In terms of processing, is synthesized initially as an inactive proenzyme, which is activated by self-cleavage at a specific serine bond to produce a beta-subunit with a hydroxyl group at its C-terminus and an alpha-subunit with a pyruvoyl group at its N-terminus.

Its subcellular location is the cytoplasm. It carries out the reaction L-aspartate + H(+) = beta-alanine + CO2. Its pathway is cofactor biosynthesis; (R)-pantothenate biosynthesis; beta-alanine from L-aspartate: step 1/1. Functionally, catalyzes the pyruvoyl-dependent decarboxylation of aspartate to produce beta-alanine. The protein is Aspartate 1-decarboxylase of Stenotrophomonas maltophilia (strain R551-3).